The sequence spans 469 residues: Neuraminidase (469 aa).

At M1–T9 the chain is on the intravirion side. The helical transmembrane segment at I10 to V30 threads the bilayer. The involved in apical transport and lipid raft association stretch occupies residues G11 to V33. The Virion surface portion of the chain corresponds to T31–I469. A hypervariable stalk region region spans residues H36–S88. N-linked (GlcNAc...) asparagine; by host glycans are attached at residues N61, N70, and N86. Positions Q91–I469 are head of neuraminidase. 8 disulfide bridges follow: C92–C417, C124–C129, C183–C230, C232–C237, C278–C291, C280–C289, C318–C337, and C421–C447. R118 is a binding site for substrate. N146 carries N-linked (GlcNAc...) asparagine; by host glycosylation. D151 serves as the catalytic Proton donor/acceptor. R152 contributes to the substrate binding site. Residues N200 and N234 are each glycosylated (N-linked (GlcNAc...) asparagine; by host). Substrate is bound at residue E276–E277. Substrate is bound at residue R292. 3 residues coordinate Ca(2+): D293, G297, and D324. Residue R371 coordinates substrate. N-linked (GlcNAc...) asparagine; by host glycosylation occurs at N402. Catalysis depends on Y406, which acts as the Nucleophile.

It belongs to the glycosyl hydrolase 34 family. As to quaternary structure, homotetramer. Ca(2+) is required as a cofactor. Post-translationally, N-glycosylated.

The protein localises to the virion membrane. It is found in the host apical cell membrane. It catalyses the reaction Hydrolysis of alpha-(2-&gt;3)-, alpha-(2-&gt;6)-, alpha-(2-&gt;8)- glycosidic linkages of terminal sialic acid residues in oligosaccharides, glycoproteins, glycolipids, colominic acid and synthetic substrates.. Inhibited by the neuraminidase inhibitors zanamivir (Relenza) and oseltamivir (Tamiflu). These drugs interfere with the release of progeny virus from infected cells and are effective against all influenza strains. Resistance to neuraminidase inhibitors is quite rare. Functionally, catalyzes the removal of terminal sialic acid residues from viral and cellular glycoconjugates. Cleaves off the terminal sialic acids on the glycosylated HA during virus budding to facilitate virus release. Additionally helps virus spread through the circulation by further removing sialic acids from the cell surface. These cleavages prevent self-aggregation and ensure the efficient spread of the progeny virus from cell to cell. Otherwise, infection would be limited to one round of replication. Described as a receptor-destroying enzyme because it cleaves a terminal sialic acid from the cellular receptors. May facilitate viral invasion of the upper airways by cleaving the sialic acid moieties on the mucin of the airway epithelial cells. Likely to plays a role in the budding process through its association with lipid rafts during intracellular transport. May additionally display a raft-association independent effect on budding. Plays a role in the determination of host range restriction on replication and virulence. Sialidase activity in late endosome/lysosome traffic seems to enhance virus replication. In Aves (whales), this protein is Neuraminidase.